The following is a 170-amino-acid chain: Large ribosomal subunit protein uL10 (170 aa).

The protein belongs to the universal ribosomal protein uL10 family. In terms of assembly, part of the ribosomal stalk of the 50S ribosomal subunit. The N-terminus interacts with L11 and the large rRNA to form the base of the stalk. The C-terminus forms an elongated spine to which L12 dimers bind in a sequential fashion forming a multimeric L10(L12)X complex.

Forms part of the ribosomal stalk, playing a central role in the interaction of the ribosome with GTP-bound translation factors. The protein is Large ribosomal subunit protein uL10 of Fusobacterium nucleatum subsp. nucleatum (strain ATCC 25586 / DSM 15643 / BCRC 10681 / CIP 101130 / JCM 8532 / KCTC 2640 / LMG 13131 / VPI 4355).